The following is a 715-amino-acid chain: Polyribonucleotide nucleotidyltransferase (715 aa).

Mg(2+) contacts are provided by Asp-488 and Asp-494. A KH domain is found at 555 to 614 (PRIEVMHIPTDKIRDVIGSGGKVIREIVEKTGAKINIEDDGTVKIASSNAKEIEAAKKWI). Residues 624-692 (GEIYEGTVVK…ERGKVRLSMK (69 aa)) form the S1 motif domain.

It belongs to the polyribonucleotide nucleotidyltransferase family. Mg(2+) is required as a cofactor.

Its subcellular location is the cytoplasm. The catalysed reaction is RNA(n+1) + phosphate = RNA(n) + a ribonucleoside 5'-diphosphate. Its function is as follows. Involved in mRNA degradation. Catalyzes the phosphorolysis of single-stranded polyribonucleotides processively in the 3'- to 5'-direction. The sequence is that of Polyribonucleotide nucleotidyltransferase from Mesorhizobium japonicum (strain LMG 29417 / CECT 9101 / MAFF 303099) (Mesorhizobium loti (strain MAFF 303099)).